The chain runs to 327 residues: Tartrate-resistant acid phosphatase type 5 (327 aa).

A signal peptide spans 1–22 (MDSWVVLLGLQIIWLPLLTHGT). Fe cation is bound by residues aspartate 35, aspartate 73, tyrosine 76, and asparagine 112. N-linked (GlcNAc...) asparagine glycans are attached at residues asparagine 118 and asparagine 149. Cysteine 163 and cysteine 221 are disulfide-bonded. Residues histidine 207, histidine 242, and histidine 244 each contribute to the Fe cation site.

As to quaternary structure, exists either as monomer or, after proteolytic processing, as a dimer of two chains linked by disulfide bond(s). Fe cation is required as a cofactor. Characteristic constituent of osteoclasts.

Its subcellular location is the lysosome. The enzyme catalyses a phosphate monoester + H2O = an alcohol + phosphate. May play a role in the process of bone resorption. The osteoclastic trap acts on nucleotide tri- and diphosphates with higher affinity, compared with other substrates. This chain is Tartrate-resistant acid phosphatase type 5 (Acp5), found in Mus musculus (Mouse).